We begin with the raw amino-acid sequence, 94 residues long: Virion membrane protein OPG135 (94 aa).

An N-terminal signal peptide occupies residues Met1 to Gly22. Over Ala23–Trp45 the chain is Intravirion. A helical membrane pass occupies residues Phe46 to Leu66. Topologically, residues Tyr67–Asn83 are virion surface. The span at Lys74 to Glu84 shows a compositional bias: basic and acidic residues. Residues Lys74–Lys94 are disordered. N-linked (GlcNAc...) asparagine; by host glycosylation is present at Asn83. The segment covering Ser85–Lys94 has biased composition (polar residues).

The protein belongs to the oerthopoxvirus OPG135 family.

It localises to the virion membrane. It is found in the host cytoplasm. Its function is as follows. Envelope protein. Required for an early step in virion morphogenesis. In Homo sapiens (Human), this protein is Virion membrane protein OPG135 (OPG135).